A 655-amino-acid chain; its full sequence is p-hydroxybenzoic acid efflux pump subunit AaeB (655 aa).

11 helical membrane passes run phenylalanine 13–leucine 33, tryptophan 38–proline 58, leucine 69–isoleucine 89, leucine 93–valine 113, tryptophan 121–leucine 141, glutamate 152–isoleucine 172, leucine 370–valine 390, phenylalanine 407–proline 427, glutamine 431–valine 451, methionine 459–phenylalanine 479, and phenylalanine 482–leucine 502.

It belongs to the aromatic acid exporter ArAE (TC 2.A.85) family.

The protein resides in the cell inner membrane. In terms of biological role, forms an efflux pump with AaeA. Could function as a metabolic relief valve, allowing to eliminate certain compounds when they accumulate to high levels in the cell. This is p-hydroxybenzoic acid efflux pump subunit AaeB from Salmonella arizonae (strain ATCC BAA-731 / CDC346-86 / RSK2980).